The following is a 272-amino-acid chain: Ethanolamine ammonia-lyase small subunit (272 aa).

Residues valine 161, glutamate 182, and cysteine 211 each contribute to the adenosylcob(III)alamin site.

The protein belongs to the EutC family. In terms of assembly, the basic unit is a heterodimer which dimerizes to form tetramers. The heterotetramers trimerize; 6 large subunits form a core ring with 6 small subunits projecting outwards. Adenosylcob(III)alamin serves as cofactor.

The protein resides in the bacterial microcompartment. The enzyme catalyses ethanolamine = acetaldehyde + NH4(+). It functions in the pathway amine and polyamine degradation; ethanolamine degradation. Catalyzes the deamination of various vicinal amino-alcohols to oxo compounds. Allows this organism to utilize ethanolamine as the sole source of nitrogen and carbon in the presence of external vitamin B12. The protein is Ethanolamine ammonia-lyase small subunit of Pseudomonas putida (strain GB-1).